A 440-amino-acid polypeptide reads, in one-letter code: Gap junction gamma-2 protein (440 aa).

The Cytoplasmic portion of the chain corresponds to 1–21; sequence MTNMSWSFLTRLLEEIHNHST. A helical membrane pass occupies residues 22–42; sequence FVGKVWLTVLVVFRIVLTAVG. The Extracellular portion of the chain corresponds to 43–78; it reads GESIYSDEQSKFTCNTRQPGCDNVCYDAFAPLSHVR. A helical transmembrane segment spans residues 79 to 99; that stretch reads FWVFQIVVISTPSVMYLGYAV. Topologically, residues 100–223 are cytoplasmic; sequence HRLARASEQE…AQLVVRAAFE (124 aa). The interval 108–199 is disordered; the sequence is QERRRALRRR…TPGPAGQHDG (92 aa). Positions 112 to 124 are enriched in basic residues; it reads RALRRRPGTRRLP. The segment covering 136–149 has biased composition (low complexity); it reads PDTTDLGEAEPILA. Residues 150–173 show a composition bias toward acidic residues; sequence LEEDEDEEPGAPEGPGEDTEEERA. The chain crosses the membrane as a helical span at residues 224-244; that stretch reads VAFLVGQYLLYGFEVPPFFAC. Topologically, residues 245–264 are extracellular; the sequence is SRQPCPHVVDCFVSRPTEKT. The helical transmembrane segment at 265 to 285 threads the bilayer; it reads VFLLVMYVVSCLCLLLNLCEM. Topologically, residues 286–440 are cytoplasmic; that stretch reads AHLGLGSAQD…SRDGKATVWI (155 aa). The disordered stretch occupies residues 369–440; sequence DRDSPPCAGL…SRDGKATVWI (72 aa). Position 372 is a phosphoserine (S372). Residues 388–401 show a composition bias toward low complexity; that stretch reads VGGLASGTGSATSG.

It belongs to the connexin family. Gamma-type subfamily. A connexon is composed of a hexamer of connexins. Interacts with TJP1. In terms of tissue distribution, mainly expressed by oligodendrocytes in the central nervous system (at protein level).

It is found in the cell membrane. The protein localises to the cell junction. It localises to the gap junction. In terms of biological role, one gap junction consists of a cluster of closely packed pairs of transmembrane channels, the connexons, through which materials of low MW diffuse from one cell to a neighboring cell. May play a role in myelination in central and peripheral nervous systems. The chain is Gap junction gamma-2 protein (Gjc2) from Mus musculus (Mouse).